Here is a 293-residue protein sequence, read N- to C-terminus: Ribosomal protein L11 methyltransferase (293 aa).

The S-adenosyl-L-methionine site is built by threonine 145, glycine 166, aspartate 188, and asparagine 230.

This sequence belongs to the methyltransferase superfamily. PrmA family.

It is found in the cytoplasm. The enzyme catalyses L-lysyl-[protein] + 3 S-adenosyl-L-methionine = N(6),N(6),N(6)-trimethyl-L-lysyl-[protein] + 3 S-adenosyl-L-homocysteine + 3 H(+). Methylates ribosomal protein L11. This Salmonella dublin (strain CT_02021853) protein is Ribosomal protein L11 methyltransferase.